Here is a 250-residue protein sequence, read N- to C-terminus: Manganese transport system ATP-binding protein MntB (250 aa).

The ABC transporter domain maps to 4–236 (VELDNVTVAY…NLQKTYGGRL (233 aa)). 36–43 (GPNGAGKS) provides a ligand contact to ATP.

Belongs to the ABC transporter superfamily. As to quaternary structure, the complex is probably composed of two ATP-binding proteins (MntB), two transmembrane proteins (MntC and MntD) and a solute-binding protein (MntA).

The protein localises to the cell membrane. In terms of biological role, probably part of the ABC transporter complex MntABCD involved in manganese import. Probably responsible for energy coupling to the transport system. This is Manganese transport system ATP-binding protein MntB from Bacillus subtilis (strain 168).